We begin with the raw amino-acid sequence, 2598 residues long: Partially reducing polyketide synthase men1 (2598 aa).

Residues 7 to 435 (SQSIAIVGLS…GSNAHAILDD (429 aa)) enclose the Ketosynthase family 3 (KS3) domain. Residues Cys181, His316, and His358 each act as for beta-ketoacyl synthase activity in the active site. Positions 450–459 (GKSHHHHHQH) are enriched in basic residues. Disordered regions lie at residues 450–490 (GKSH…NGTT) and 537–557 (AEKQ…DPEK). The span at 474–490 (VNGTSEVNGTSGVNGTT) shows a compositional bias: low complexity. The region spanning 611–915 (YVFTGQGAQW…RGPVTQILQS (305 aa)) is the Malonyl-CoA:ACP transacylase (MAT) domain. The N-terminal hotdog fold stretch occupies residues 1008 to 1151 (LGLIGAPMPN…GSVAVEFGAL (144 aa)). In terms of domain architecture, PKS/mFAS DH spans 1008-1325 (LGLIGAPMPN…CVEMPSASGM (318 aa)). The interval 1009 to 1323 (GLIGAPMPNF…LVCVEMPSAS (315 aa)) is dehydratase (DH) domain. The interval 1169-1325 (TISQEVDVFY…CVEMPSASGM (157 aa)) is C-terminal hotdog fold. The region spanning 1886 to 2197 (GMLNTLCFEI…ARSRQDKIVI (312 aa)) is the Enoyl reductase (ER) domain. The Ketoreductase (KR) domain maps to 2222–2399 (TYLIAGGLGG…AATIDLGIVK (178 aa)). One can recognise a Carrier domain in the interval 2510 to 2587 (EAARLVSAAV…AFASDLAKKG (78 aa)). At Ser2547 the chain carries O-(pantetheine 4'-phosphoryl)serine.

The cofactor is pantetheine 4'-phosphate.

The protein operates within secondary metabolite biosynthesis. In terms of biological role, partially reducing polyketide synthase; part of the gene cluster that mediates the biosynthesis of menisporopsin A, a bioactive macrocyclic polylactone. The biosynthesis of menisporopsin A is performed by a reducing (man1) and a non-reducing (men2) polyketide synthase that catalyze the formation of each menisporopsin A subunits, while the esterification and cyclolactonization activities are probably peformed by the unusual thioesterase domain of men2. First, a reduced diketide intermediate, 3-hydroxybutyryl-S-ACP is produced by men1 and transferred to men2; this is followed by a second reduced diketide which is further elongated using 3 units of malonyl-coA to form a reduced pentaketide. The cyclization of this intermediate by the PT domain forms the second subunit, 2,4-dihydroxy-6-(2-hydroxy-n-propyl)benzoyl-S-ACP. The TE domain of men2 then esterifies the secondary hydroxyl group on the side chain of the second subunit with the acyl-TE of the first subunit to form the first ester intermediate. This process occurs iteratively to form a linear tetraester intermediate. The final subunit is formed by a similar process, except that an extra malonyl-CoA is required in an additional elongation step to form a reduced hexaketide intermediate, and the carbonyl group next to the secondary hydroxyl group is reduced by a trans-acting ketoreductase. Again, the PT domain catalyzes cyclization to form the largest subunit, 2,4-dihydroxy-6-(2,4-dihydroxy-n-pentyl) benzoyl-S-ACP. Then the linear pentaester intermediate is formed. In this step, if the intermediate transfer rate is slow, intra- molecular cyclization involving the secondary hydroxyl group of the pentaester intermediate may occur to form menisporopsin B. Alternatively, transfer of the pentaester intermediate to the TE domain would allow cyclolactonization to be catalyzed by the TE to form menisporopsin A. The polypeptide is Partially reducing polyketide synthase men1 (Menisporopsis theobromae).